We begin with the raw amino-acid sequence, 381 residues long: Carbamoyl phosphate synthase small chain (381 aa).

The segment at 1–192 (MSKPAILALE…SGYADVSQGD (192 aa)) is CPSase. 3 residues coordinate L-glutamine: serine 47, glycine 244, and glycine 246. The Glutamine amidotransferase type-1 domain maps to 196–381 (HVVAYDYGMK…RFVEMMRHRR (186 aa)). Cysteine 272 serves as the catalytic Nucleophile. L-glutamine is bound by residues leucine 273, glutamine 276, asparagine 314, glycine 316, and phenylalanine 317. Catalysis depends on residues histidine 356 and glutamate 358.

Belongs to the CarA family. Composed of two chains; the small (or glutamine) chain promotes the hydrolysis of glutamine to ammonia, which is used by the large (or ammonia) chain to synthesize carbamoyl phosphate. Tetramer of heterodimers (alpha,beta)4.

The catalysed reaction is hydrogencarbonate + L-glutamine + 2 ATP + H2O = carbamoyl phosphate + L-glutamate + 2 ADP + phosphate + 2 H(+). It carries out the reaction L-glutamine + H2O = L-glutamate + NH4(+). It participates in amino-acid biosynthesis; L-arginine biosynthesis; carbamoyl phosphate from bicarbonate: step 1/1. Its pathway is pyrimidine metabolism; UMP biosynthesis via de novo pathway; (S)-dihydroorotate from bicarbonate: step 1/3. Small subunit of the glutamine-dependent carbamoyl phosphate synthetase (CPSase). CPSase catalyzes the formation of carbamoyl phosphate from the ammonia moiety of glutamine, carbonate, and phosphate donated by ATP, constituting the first step of 2 biosynthetic pathways, one leading to arginine and/or urea and the other to pyrimidine nucleotides. The small subunit (glutamine amidotransferase) binds and cleaves glutamine to supply the large subunit with the substrate ammonia. This Halomonas eurihalina protein is Carbamoyl phosphate synthase small chain.